The chain runs to 346 residues: tRNA N6-adenosine threonylcarbamoyltransferase (346 aa).

Fe cation-binding residues include His-111 and His-115. Substrate-binding positions include 134-138 (LVSGG), Asp-167, Gly-180, Asp-184, and Asn-279. Asp-307 is a Fe cation binding site.

This sequence belongs to the KAE1 / TsaD family. The cofactor is Fe(2+).

The protein localises to the cytoplasm. It catalyses the reaction L-threonylcarbamoyladenylate + adenosine(37) in tRNA = N(6)-L-threonylcarbamoyladenosine(37) in tRNA + AMP + H(+). Its function is as follows. Required for the formation of a threonylcarbamoyl group on adenosine at position 37 (t(6)A37) in tRNAs that read codons beginning with adenine. Is involved in the transfer of the threonylcarbamoyl moiety of threonylcarbamoyl-AMP (TC-AMP) to the N6 group of A37, together with TsaE and TsaB. TsaD likely plays a direct catalytic role in this reaction. The chain is tRNA N6-adenosine threonylcarbamoyltransferase from Trichormus variabilis (strain ATCC 29413 / PCC 7937) (Anabaena variabilis).